Here is a 709-residue protein sequence, read N- to C-terminus: Phosphoprotein (709 aa).

Residues 1–35 (MDKLELVNDGLNIIDFIQKNQKEIQKTYGRSSIQQ) form an N0 binding region. Residues 53–92 (SGESEQVEGGMSKDDGDVERRNLEDLSSTSPTDGTIGKRV) form a disordered region. Basic and acidic residues predominate over residues 63–76 (MSKDDGDVERRNLE). Residues 110–140 (VVTDVVYHDHGGECTGYGFTSSPERGWSDYT) are interaction with host STAT1. At serine 257 the chain carries Phosphoserine; by host. Positions 265–324 (ISPEDEEPSSVGGKPNESIGRTIEGQSIRDNLQAKDNKSTDVPGAGPKDSAVKEEPPQKR) are disordered. Position 350 is a phosphoserine; by host (serine 350). Positions 384-473 (VQTADRQRPG…VNPVDDNDSL (90 aa)) are disordered. Polar residues-rich tracts occupy residues 416–426 (GTENVPGSKSG) and 444–456 (NAEN…STAV). Positions 475–580 (DKYIMPSDDF…LVSMMIMIPG (106 aa)) are multimerization.

Homotetramer. Interacts (via multimerization domain) with polymerase L; this interaction forms the polymerase L-P complex. Interacts (via N-terminus) with N0 (via Ncore); this interaction allows P to chaperon N0 to avoid N polymerization before encapsidation. Interacts (via C-terminus) with N-RNA template (via C-terminus); this interaction positions the polymerase on the template for both transcription and replication. Interacts with host STAT1.

The protein resides in the virion. Its subcellular location is the host cytoplasm. Functionally, essential cofactor of the RNA polymerase L that plays a central role in the transcription and replication by forming the polymerase complex with RNA polymerase L and recruiting L to the genomic N-RNA template for RNA synthesis. Also plays a central role in the encapsidation of nascent RNA chains by forming the encapsidation complex with the nucleocapsid protein N (N-P complex). Acts as a chaperone for newly synthesized free N protein, so-called N0, allowing encapsidation of nascent RNA chains during replication. The nucleoprotein protein N prevents excessive phosphorylation of P, which leads to down-regulation of viral transcription/ replication. Participates, together with N, in the formation of viral factories (viroplasms), which are large inclusions in the host cytoplasm where replication takes place. This is Phosphoprotein (P/V/C) from Nipah virus.